Reading from the N-terminus, the 265-residue chain is Glutamate racemase (265 aa).

Substrate-binding positions include 12-13 and 44-45; these read DS and YG. Residue cysteine 75 is the Proton donor/acceptor of the active site. Substrate is bound at residue 76–77; sequence NT. Cysteine 186 acts as the Proton donor/acceptor in catalysis. Substrate is bound at residue 187 to 188; that stretch reads TH.

This sequence belongs to the aspartate/glutamate racemases family.

It catalyses the reaction L-glutamate = D-glutamate. Its pathway is cell wall biogenesis; peptidoglycan biosynthesis. Functionally, provides the (R)-glutamate required for cell wall biosynthesis. The protein is Glutamate racemase of Pseudomonas paraeruginosa (strain DSM 24068 / PA7) (Pseudomonas aeruginosa (strain PA7)).